We begin with the raw amino-acid sequence, 454 residues long: Growth/differentiation factor 9 (454 aa).

Positions methionine 1–glycine 24 are cleaved as a signal peptide. The propeptide occupies serine 25 to arginine 319. 5 N-linked (GlcNAc...) asparagine glycosylation sites follow: asparagine 106, asparagine 163, asparagine 236, asparagine 255, and asparagine 268. The tract at residues glycine 303–lysine 330 is disordered. Serine 325 carries the post-translational modification Phosphoserine; by CK. Asparagine 338 carries an N-linked (GlcNAc...) asparagine glycan. 3 disulfide bridges follow: cysteine 353-cysteine 419, cysteine 382-cysteine 451, and cysteine 386-cysteine 453.

Belongs to the TGF-beta family. Homodimer or heterodimer (Potential). But, in contrast to other members of this family, cannot be disulfide-linked. Phosphorylated; phosphorylation is critical for GDF9 function. In vitro, can be phosphorylated by CK at Ser-325. In terms of tissue distribution, expressed in ovarian granulosa cells. Present in oocytes of primary follicles (at protein level).

Its subcellular location is the secreted. Required for ovarian folliculogenesis. Promotes primordial follicle development. Stimulates granulosa cell proliferation. Promotes cell transition from G0/G1 to S and G2/M phases, through an increase of CCND1 and CCNE1 expression, and RB1 phosphorylation. It regulates STAR expression and cAMP-dependent progesterone release in granulosa and thecal cells. Attenuates the suppressive effects of activin A on STAR expression and progesterone production by increasing the expression of inhibin B. It suppresses FST and FSTL3 production in granulosa-lutein cells. This Homo sapiens (Human) protein is Growth/differentiation factor 9 (GDF9).